The chain runs to 158 residues: Crossover junction endodeoxyribonuclease RuvC (158 aa).

Residues D7, E66, and D139 contribute to the active site. 3 residues coordinate Mg(2+): D7, E66, and D139.

The protein belongs to the RuvC family. Homodimer which binds Holliday junction (HJ) DNA. The HJ becomes 2-fold symmetrical on binding to RuvC with unstacked arms; it has a different conformation from HJ DNA in complex with RuvA. In the full resolvosome a probable DNA-RuvA(4)-RuvB(12)-RuvC(2) complex forms which resolves the HJ. Mg(2+) is required as a cofactor.

The protein localises to the cytoplasm. The catalysed reaction is Endonucleolytic cleavage at a junction such as a reciprocal single-stranded crossover between two homologous DNA duplexes (Holliday junction).. Its function is as follows. The RuvA-RuvB-RuvC complex processes Holliday junction (HJ) DNA during genetic recombination and DNA repair. Endonuclease that resolves HJ intermediates. Cleaves cruciform DNA by making single-stranded nicks across the HJ at symmetrical positions within the homologous arms, yielding a 5'-phosphate and a 3'-hydroxyl group; requires a central core of homology in the junction. The consensus cleavage sequence is 5'-(A/T)TT(C/G)-3'. Cleavage occurs on the 3'-side of the TT dinucleotide at the point of strand exchange. HJ branch migration catalyzed by RuvA-RuvB allows RuvC to scan DNA until it finds its consensus sequence, where it cleaves and resolves the cruciform DNA. The polypeptide is Crossover junction endodeoxyribonuclease RuvC (Carboxydothermus hydrogenoformans (strain ATCC BAA-161 / DSM 6008 / Z-2901)).